Reading from the N-terminus, the 160-residue chain is Arginine repressor (160 aa).

It belongs to the ArgR family.

The protein localises to the cytoplasm. It functions in the pathway amino-acid biosynthesis; L-arginine biosynthesis [regulation]. Its function is as follows. Regulates arginine biosynthesis genes. The protein is Arginine repressor of Anaeromyxobacter sp. (strain K).